The following is a 321-amino-acid chain: Acetyl-coenzyme A carboxylase carboxyl transferase subunit beta, chloroplastic (321 aa).

A CoA carboxyltransferase N-terminal domain is found at 47 to 321 (LWAQCDNCEN…FWFYVLRSSL (275 aa)). Cys51, Cys54, Cys70, and Cys73 together coordinate Zn(2+). The C4-type zinc-finger motif lies at 51 to 73 (CDNCENLLYLRFLRENQSVCKEC).

Belongs to the AccD/PCCB family. Acetyl-CoA carboxylase is a heterohexamer composed of biotin carboxyl carrier protein, biotin carboxylase and 2 subunits each of ACCase subunit alpha and ACCase plastid-coded subunit beta (accD). Zn(2+) serves as cofactor.

The protein resides in the plastid. The protein localises to the chloroplast stroma. The enzyme catalyses N(6)-carboxybiotinyl-L-lysyl-[protein] + acetyl-CoA = N(6)-biotinyl-L-lysyl-[protein] + malonyl-CoA. It participates in lipid metabolism; malonyl-CoA biosynthesis; malonyl-CoA from acetyl-CoA: step 1/1. Component of the acetyl coenzyme A carboxylase (ACC) complex. Biotin carboxylase (BC) catalyzes the carboxylation of biotin on its carrier protein (BCCP) and then the CO(2) group is transferred by the transcarboxylase to acetyl-CoA to form malonyl-CoA. The chain is Acetyl-coenzyme A carboxylase carboxyl transferase subunit beta, chloroplastic from Pinus thunbergii (Japanese black pine).